A 98-amino-acid chain; its full sequence is NADH-ubiquinone oxidoreductase chain 4L (98 aa).

The next 3 helical transmembrane spans lie at 1-21 (MTPTHFSLNAAFMLGLAGLTF), 26-46 (LLSALLCLEGMMLSLFISMAL), and 59-79 (APMLLLAFSACEASAGLALLV).

Belongs to the complex I subunit 4L family. In terms of assembly, core subunit of respiratory chain NADH dehydrogenase (Complex I) which is composed of 45 different subunits.

The protein resides in the mitochondrion inner membrane. It carries out the reaction a ubiquinone + NADH + 5 H(+)(in) = a ubiquinol + NAD(+) + 4 H(+)(out). In terms of biological role, core subunit of the mitochondrial membrane respiratory chain NADH dehydrogenase (Complex I) which catalyzes electron transfer from NADH through the respiratory chain, using ubiquinone as an electron acceptor. Part of the enzyme membrane arm which is embedded in the lipid bilayer and involved in proton translocation. The polypeptide is NADH-ubiquinone oxidoreductase chain 4L (mt-nd4l) (Danio rerio (Zebrafish)).